A 2050-amino-acid chain; its full sequence is Unconventional myosin-XVIIIa (2050 aa).

2 stretches are compositionally biased toward basic and acidic residues: residues 1-17 (MFNL…GRKE) and 23-34 (EKKERMSAAELR). The disordered stretch occupies residues 1-34 (MFNLMKKDKDKDGGRKEKKEKKEKKERMSAAELR). The tract at residues 1-398 (MFNLMKKDKD…LDVDEDDIEK (398 aa)) is mediates nucleotide-independent binding to F-actin and interaction with GOLPH3. Phosphoserine occurs at positions 35, 52, 72, and 74. Thr79 carries the phosphothreonine modification. Residues Ser83 and Ser98 each carry the phosphoserine modification. Position 99 is a phosphothreonine (Thr99). Phosphoserine occurs at positions 102 and 103. The Interaction with actin signature appears at 114–118 (RGSVL). Residues Ser140, Ser145, Ser157, Ser160, Ser164, Ser234, and Ile340 each carry the phosphoserine modification. Positions 140–167 (SFSQRSRDESASETSTPSEHSAAPSPQV) are disordered. The 92-residue stretch at 220 to 311 (ELELQRRPTG…SVRLKVQPIP (92 aa)) folds into the PDZ domain. Residues 349–401 (TEKVWLVHRDGFSLASQLKSEELSLPEGKARVKLDHDGAILDVDEDDIEKANA) enclose the Myosin N-terminal SH3-like domain. A Myosin motor domain is found at 405–1181 (DRLEDLASLV…TLARLEEQRD (777 aa)). Residue 498–505 (GSSGSGKT) coordinates ATP. A phosphoserine mark is found at Ser983, Ser1063, Ser1064, and Ser1066. The disordered stretch occupies residues 1051-1071 (PGEPRSASSRRVSSSSELDLP). A compositionally biased stretch (low complexity) spans 1055–1066 (RSASSRRVSSSS). The IQ domain occupies 1184–1213 (TSRHLTLFQAACRGYLARQHFKKRKIQDLA). The stretch at 1242–1967 (LIQVQLSEEQ…KKNKLEGDSD (726 aa)) forms a coiled coil. A disordered region spans residues 1448-1477 (RNHELEKKQRRFDSELSQAHEETQREKLQR). Position 1636 is a phosphoserine (Ser1636). A disordered region spans residues 1848 to 1897 (MEKLTEERDQRAAAENREKEQNKRLQRQLRDTKEEMSELARKEAEASRKK). Ser1938, Ser1966, Ser1970, Ser1994, Ser1998, Ser2002, Ser2003, Ser2016, Ser2032, Ser2037, and Ser2039 each carry phosphoserine. Residues 1955–2050 (YQKKKNKLEG…TEAKLTETSA (96 aa)) form a disordered region. Thr2041 is subject to Phosphothreonine. A compositionally biased stretch (basic and acidic residues) spans 2041-2050 (TEAKLTETSA).

The protein belongs to the TRAFAC class myosin-kinesin ATPase superfamily. Myosin family. Homodimer. Forms a tripartite complex with CDC42BPA/CDC42BPB and LURAP1 with the latter acting as an adapter connecting CDC42BPA/CDC42BPB and MYO18A. Binds F-actin; regulated by ADP and GOLPH3. Interacts with GOLPH3; the interaction is direct and may link Golgi membranes to the actin cytoskeleton. Interacts with JAK3. Interacts with MSR1 and CD14. Phosphorylated on tyrosine upon CSF1R activation. Isoform 6 is phosphorylated on Ser-340. In terms of tissue distribution, isoform 1; Expressed ubiquitously. Isoform 2: Specifically expressed in most hematopoietic cells. Isoform 3: Predominantly expressed in alveolar macrophages.

Its subcellular location is the golgi apparatus. It localises to the trans-Golgi network. The protein resides in the golgi outpost. It is found in the cytoplasm. The protein localises to the cytoskeleton. Its subcellular location is the microtubule organizing center. It localises to the endoplasmic reticulum-Golgi intermediate compartment. In terms of biological role, may link Golgi membranes to the cytoskeleton and participate in the tensile force required for vesicle budding from the Golgi. Thereby, may play a role in Golgi membrane trafficking and could indirectly give its flattened shape to the Golgi apparatus. Alternatively, in concert with LURAP1 and CDC42BPA/CDC42BPB, has been involved in modulating lamellar actomyosin retrograde flow that is crucial to cell protrusion and migration. May be involved in the maintenance of the stromal cell architectures required for cell to cell contact. Regulates trafficking, expression, and activation of innate immune receptors on macrophages. Plays a role to suppress inflammatory responsiveness of macrophages via a mechanism that modulates CD14 trafficking. Acts as a receptor of surfactant-associated protein A (SFTPA1/SP-A) and plays an important role in internalization and clearance of SFTPA1-opsonized S.aureus by alveolar macrophages. Strongly enhances natural killer cell cytotoxicity. The polypeptide is Unconventional myosin-XVIIIa (Myo18a) (Mus musculus (Mouse)).